A 206-amino-acid polypeptide reads, in one-letter code: Small ribosomal subunit protein uS4 (206 aa).

The S4 RNA-binding domain maps to 96–156 (GRLDNVVYRM…EKSKKQARIK (61 aa)).

This sequence belongs to the universal ribosomal protein uS4 family. In terms of assembly, part of the 30S ribosomal subunit. Contacts protein S5. The interaction surface between S4 and S5 is involved in control of translational fidelity.

Functionally, one of the primary rRNA binding proteins, it binds directly to 16S rRNA where it nucleates assembly of the body of the 30S subunit. In terms of biological role, with S5 and S12 plays an important role in translational accuracy. The polypeptide is Small ribosomal subunit protein uS4 (Haemophilus influenzae (strain 86-028NP)).